A 259-amino-acid polypeptide reads, in one-letter code: Hemin import ATP-binding protein HmuV (259 aa).

The ABC transporter domain maps to 2-238 (IEARDLNVSI…ALLSEVFDCQ (237 aa)). 34-41 (GPNGSGKS) provides a ligand contact to ATP.

The protein belongs to the ABC transporter superfamily. Heme (hemin) importer (TC 3.A.1.14.5) family. The complex is composed of two ATP-binding proteins (HmuV), two transmembrane proteins (HmuU) and a solute-binding protein (HmuT).

The protein localises to the cell inner membrane. Functionally, part of the ABC transporter complex HmuTUV involved in hemin import. Responsible for energy coupling to the transport system. In Chelativorans sp. (strain BNC1), this protein is Hemin import ATP-binding protein HmuV.